The following is a 153-amino-acid chain: Cytochrome c-554 (153 aa).

The first 20 residues, 1–20 (MRPIPALALTFSLVAMPALA), serve as a signal peptide directing secretion. Glutamine 21 is subject to Pyrrolidone carboxylic acid. The heme c site is built by methionine 37, cysteine 142, cysteine 145, and histidine 146.

Binds 1 heme c group covalently per subunit.

The protein localises to the periplasm. Functionally, monoheme c-type cytochrome, that is particularly expressed when cells generate energy via aerobic respiration. This chain is Cytochrome c-554 (cycF), found in Cereibacter sphaeroides (strain ATCC 17023 / DSM 158 / JCM 6121 / CCUG 31486 / LMG 2827 / NBRC 12203 / NCIMB 8253 / ATH 2.4.1.) (Rhodobacter sphaeroides).